Here is a 79-residue protein sequence, read N- to C-terminus: Sec-independent protein translocase protein TatA (79 aa).

Residues methionine 1–phenylalanine 21 traverse the membrane as a helical segment. Basic and acidic residues-rich tracts occupy residues methionine 44 to aspartate 58 and glutamine 66 to alanine 79. The segment at methionine 44 to alanine 79 is disordered.

The protein belongs to the TatA/E family. In terms of assembly, the Tat system comprises two distinct complexes: a TatABC complex, containing multiple copies of TatA, TatB and TatC subunits, and a separate TatA complex, containing only TatA subunits. Substrates initially bind to the TatABC complex, which probably triggers association of the separate TatA complex to form the active translocon.

Its subcellular location is the cell inner membrane. Its function is as follows. Part of the twin-arginine translocation (Tat) system that transports large folded proteins containing a characteristic twin-arginine motif in their signal peptide across membranes. TatA could form the protein-conducting channel of the Tat system. In Alcanivorax borkumensis (strain ATCC 700651 / DSM 11573 / NCIMB 13689 / SK2), this protein is Sec-independent protein translocase protein TatA.